A 145-amino-acid chain; its full sequence is Ribosomal RNA large subunit methyltransferase H (145 aa).

S-adenosyl-L-methionine is bound by residues Leu64, Gly93, and 112–117; that span reads LSPLTF.

The protein belongs to the RNA methyltransferase RlmH family. As to quaternary structure, homodimer.

The protein resides in the cytoplasm. It catalyses the reaction pseudouridine(1915) in 23S rRNA + S-adenosyl-L-methionine = N(3)-methylpseudouridine(1915) in 23S rRNA + S-adenosyl-L-homocysteine + H(+). Functionally, specifically methylates the pseudouridine at position 1915 (m3Psi1915) in 23S rRNA. In Prochlorococcus marinus (strain MIT 9211), this protein is Ribosomal RNA large subunit methyltransferase H.